A 341-amino-acid chain; its full sequence is tRNA N6-adenosine threonylcarbamoyltransferase (341 aa).

His-111 and His-115 together coordinate Fe cation. Residues 134-138, Asp-167, Gly-180, and Asn-276 each bind substrate; that span reads LVSGG. Fe cation is bound at residue Asp-304.

Belongs to the KAE1 / TsaD family. Fe(2+) is required as a cofactor.

The protein localises to the cytoplasm. The catalysed reaction is L-threonylcarbamoyladenylate + adenosine(37) in tRNA = N(6)-L-threonylcarbamoyladenosine(37) in tRNA + AMP + H(+). Functionally, required for the formation of a threonylcarbamoyl group on adenosine at position 37 (t(6)A37) in tRNAs that read codons beginning with adenine. Is involved in the transfer of the threonylcarbamoyl moiety of threonylcarbamoyl-AMP (TC-AMP) to the N6 group of A37, together with TsaE and TsaB. TsaD likely plays a direct catalytic role in this reaction. The sequence is that of tRNA N6-adenosine threonylcarbamoyltransferase from Pseudomonas aeruginosa (strain UCBPP-PA14).